The following is a 215-amino-acid chain: Small ribosomal subunit protein uS5 (215 aa).

The span at 1–12 shows a compositional bias: gly residues; sequence MSGTQRRGGGAG. Residues 1-31 are disordered; it reads MSGTQRRGGGAGGERRGRDNRRGQNDRNRNQ. Residues 13 to 31 are compositionally biased toward basic and acidic residues; that stretch reads GERRGRDNRRGQNDRNRNQ. The S5 DRBM domain occupies 34 to 97; sequence YLERVVAINR…EEAKKHFFKV (64 aa).

This sequence belongs to the universal ribosomal protein uS5 family. In terms of assembly, part of the 30S ribosomal subunit. Contacts proteins S4 and S8.

With S4 and S12 plays an important role in translational accuracy. Its function is as follows. Located at the back of the 30S subunit body where it stabilizes the conformation of the head with respect to the body. This chain is Small ribosomal subunit protein uS5, found in Cutibacterium acnes (strain DSM 16379 / KPA171202) (Propionibacterium acnes).